A 332-amino-acid chain; its full sequence is Fructose-1,6-bisphosphatase class 1 (332 aa).

Residues glutamate 94, aspartate 116, leucine 118, and aspartate 119 each coordinate Mg(2+). Residues 119 to 122, asparagine 211, tyrosine 239, 257 to 259, and lysine 269 each bind substrate; these read DGSS and YLY. Glutamate 275 is a binding site for Mg(2+).

It belongs to the FBPase class 1 family. In terms of assembly, homotetramer. Requires Mg(2+) as cofactor.

The protein localises to the cytoplasm. The enzyme catalyses beta-D-fructose 1,6-bisphosphate + H2O = beta-D-fructose 6-phosphate + phosphate. Its pathway is carbohydrate biosynthesis; Calvin cycle. This is Fructose-1,6-bisphosphatase class 1 from Synechococcus sp. (strain JA-2-3B'a(2-13)) (Cyanobacteria bacterium Yellowstone B-Prime).